The primary structure comprises 390 residues: UPF0229 protein OB2647 (390 aa).

Residues 99–121 (NASQQGQQGQGNGKKAGDQPGTD) form a disordered region.

It belongs to the UPF0229 family.

This Oceanobacillus iheyensis (strain DSM 14371 / CIP 107618 / JCM 11309 / KCTC 3954 / HTE831) protein is UPF0229 protein OB2647.